An 898-amino-acid chain; its full sequence is Phosphoenolpyruvate carboxylase (898 aa).

Residues H138 and K561 contribute to the active site.

The protein belongs to the PEPCase type 1 family. Requires Mg(2+) as cofactor.

The catalysed reaction is oxaloacetate + phosphate = phosphoenolpyruvate + hydrogencarbonate. Forms oxaloacetate, a four-carbon dicarboxylic acid source for the tricarboxylic acid cycle. This is Phosphoenolpyruvate carboxylase from Streptococcus pneumoniae serotype 4 (strain ATCC BAA-334 / TIGR4).